The following is an 829-amino-acid chain: DNA ligase (829 aa).

NAD(+)-binding positions include 38–42 (DAEYD), 87–88 (SL), and Glu-127. The active-site N6-AMP-lysine intermediate is the Lys-129. NAD(+) is bound by residues Arg-150, Glu-187, Lys-305, and Lys-329. Residues Cys-455, Cys-458, Cys-473, and Cys-479 each contribute to the Zn(2+) site. The disordered stretch occupies residues 534-564 (ETADKGSSENENGDAETVSGDLSKYNTQNGK). Residues 752–829 (GINKAVAGKT…SEAELLTLLC (78 aa)) enclose the BRCT domain.

The protein belongs to the NAD-dependent DNA ligase family. LigA subfamily. Requires Mg(2+) as cofactor. Mn(2+) serves as cofactor.

The catalysed reaction is NAD(+) + (deoxyribonucleotide)n-3'-hydroxyl + 5'-phospho-(deoxyribonucleotide)m = (deoxyribonucleotide)n+m + AMP + beta-nicotinamide D-nucleotide.. Functionally, DNA ligase that catalyzes the formation of phosphodiester linkages between 5'-phosphoryl and 3'-hydroxyl groups in double-stranded DNA using NAD as a coenzyme and as the energy source for the reaction. It is essential for DNA replication and repair of damaged DNA. This chain is DNA ligase, found in Neisseria gonorrhoeae (strain ATCC 700825 / FA 1090).